Reading from the N-terminus, the 401-residue chain is Argininosuccinate synthase (401 aa).

8–16 (AYSGGLDTS) contacts ATP. Tyr87 lines the L-citrulline pocket. Gly117 contributes to the ATP binding site. L-aspartate contacts are provided by Thr119, Asn123, and Asp124. L-citrulline is bound at residue Asn123. L-citrulline contacts are provided by Arg127, Ser175, Glu259, and Tyr271.

Belongs to the argininosuccinate synthase family. Type 1 subfamily. In terms of assembly, homotetramer.

The protein localises to the cytoplasm. It carries out the reaction L-citrulline + L-aspartate + ATP = 2-(N(omega)-L-arginino)succinate + AMP + diphosphate + H(+). The protein operates within amino-acid biosynthesis; L-arginine biosynthesis; L-arginine from L-ornithine and carbamoyl phosphate: step 2/3. This chain is Argininosuccinate synthase, found in Paenarthrobacter aurescens (strain TC1).